The sequence spans 511 residues: ATP synthase subunit alpha (511 aa).

169-176 (GDRKTGKT) provides a ligand contact to ATP.

It belongs to the ATPase alpha/beta chains family. In terms of assembly, F-type ATPases have 2 components, CF(1) - the catalytic core - and CF(0) - the membrane proton channel. CF(1) has five subunits: alpha(3), beta(3), gamma(1), delta(1), epsilon(1). CF(0) has three main subunits: a(1), b(2) and c(9-12). The alpha and beta chains form an alternating ring which encloses part of the gamma chain. CF(1) is attached to CF(0) by a central stalk formed by the gamma and epsilon chains, while a peripheral stalk is formed by the delta and b chains.

The protein resides in the cell membrane. It catalyses the reaction ATP + H2O + 4 H(+)(in) = ADP + phosphate + 5 H(+)(out). Its function is as follows. Produces ATP from ADP in the presence of a proton gradient across the membrane. The alpha chain is a regulatory subunit. In Latilactobacillus sakei subsp. sakei (strain 23K) (Lactobacillus sakei subsp. sakei), this protein is ATP synthase subunit alpha.